Reading from the N-terminus, the 814-residue chain is Rap guanine nucleotide exchange factor 5 (814 aa).

Positions 43–118 (LQAADLVKDR…DNYVFYQFSS (76 aa)) constitute a DEP domain. The N-terminal Ras-GEF domain occupies 301–434 (ARYVVVSGTP…ELKEFQKILG (134 aa)). Residues 578–813 (NTWDLALELM…FELSHRLEPR (236 aa)) form the Ras-GEF domain.

The protein resides in the nucleus. Its function is as follows. Guanine nucleotide exchange factor (GEF) for RAP1A, RAP2A and MRAS/M-Ras-GTP. Its association with MRAS inhibits Rap1 activation. The sequence is that of Rap guanine nucleotide exchange factor 5 (Rapgef5) from Mus musculus (Mouse).